The sequence spans 398 residues: Chorismate synthase (398 aa).

R44 and R50 together coordinate NADP(+). FMN-binding positions include 133 to 135, 261 to 262, G306, 321 to 325, and R347; these read RAS, QA, and KPIPT.

This sequence belongs to the chorismate synthase family. In terms of assembly, homotetramer. The cofactor is FMNH2.

It carries out the reaction 5-O-(1-carboxyvinyl)-3-phosphoshikimate = chorismate + phosphate. Its pathway is metabolic intermediate biosynthesis; chorismate biosynthesis; chorismate from D-erythrose 4-phosphate and phosphoenolpyruvate: step 7/7. In terms of biological role, catalyzes the anti-1,4-elimination of the C-3 phosphate and the C-6 proR hydrogen from 5-enolpyruvylshikimate-3-phosphate (EPSP) to yield chorismate, which is the branch point compound that serves as the starting substrate for the three terminal pathways of aromatic amino acid biosynthesis. This reaction introduces a second double bond into the aromatic ring system. The chain is Chorismate synthase from Aquifex aeolicus (strain VF5).